The chain runs to 79 residues: Sec-independent protein translocase protein TatA (79 aa).

A helical membrane pass occupies residues methionine 1–glycine 21. The segment covering isoleucine 43–serine 52 has biased composition (basic and acidic residues). A disordered region spans residues isoleucine 43–alanine 79.

This sequence belongs to the TatA/E family. As to quaternary structure, the Tat system comprises two distinct complexes: a TatABC complex, containing multiple copies of TatA, TatB and TatC subunits, and a separate TatA complex, containing only TatA subunits. Substrates initially bind to the TatABC complex, which probably triggers association of the separate TatA complex to form the active translocon.

The protein localises to the cell membrane. Part of the twin-arginine translocation (Tat) system that transports large folded proteins containing a characteristic twin-arginine motif in their signal peptide across membranes. TatA could form the protein-conducting channel of the Tat system. The protein is Sec-independent protein translocase protein TatA of Mycobacterium sp. (strain JLS).